Consider the following 98-residue polypeptide: Citrate lyase acyl carrier protein (98 aa).

Position 14 is an O-(phosphoribosyl dephospho-coenzyme A)serine (serine 14).

The protein belongs to the CitD family. In terms of assembly, oligomer with a subunit composition of (alpha,beta,gamma)6.

Its subcellular location is the cytoplasm. Functionally, covalent carrier of the coenzyme of citrate lyase. The sequence is that of Citrate lyase acyl carrier protein from Vibrio cholerae serotype O1 (strain ATCC 39315 / El Tor Inaba N16961).